Reading from the N-terminus, the 193-residue chain is Large ribosomal subunit protein uL18 (193 aa).

This sequence belongs to the universal ribosomal protein uL18 family. As to quaternary structure, part of the 50S ribosomal subunit. Contacts the 5S and 23S rRNAs.

In terms of biological role, this is one of the proteins that bind and probably mediate the attachment of the 5S RNA into the large ribosomal subunit, where it forms part of the central protuberance. The protein is Large ribosomal subunit protein uL18 of Methanococcus maripaludis (strain C5 / ATCC BAA-1333).